We begin with the raw amino-acid sequence, 41 residues long: Ornatin-A3 (41 aa).

The Cell attachment site motif lies at 33–35 (RGD).

Belongs to the ornatin family.

It localises to the secreted. Its function is as follows. Potent inhibitor of fibrinogen interaction with platelet receptors expressed on glycoprotein IIb-IIIa complex. May prevent blood from clotting during either feeding and/or storage of ingested blood. This chain is Ornatin-A3, found in Placobdella ornata (Turtle leech).